The chain runs to 603 residues: O-acetyltransferase OatA (603 aa).

A run of 11 helical transmembrane segments spans residues 17–37 (YLPG…IYHL), 45–65 (GFLG…SLLI), 87–107 (LIPA…IFKP), 148–168 (LWSL…ITFL), 177–197 (IIQT…VIHF), 211–231 (TRLQ…PFAL), 239–259 (IVVS…TLFF), 268–288 (IYNG…AIAV), 311–331 (YSLY…YVQG), 333–353 (IPVY…EISY), and 382–402 (VLVI…FDAL). Residues Ser-453, Asp-575, and His-578 contribute to the active site.

The protein belongs to the acyltransferase 3 family.

The protein resides in the cell membrane. Responsible for O-acetylation at the C(6)-hydroxyl group of N-acetylmuramyl residues, forming the corresponding N,6-O-diacetylmuramic acid of the peptidoglycan. O-acetylation of the peptidoglycan is the major determinant for lysozyme resistance. The polypeptide is O-acetyltransferase OatA (oatA) (Staphylococcus aureus (strain MRSA252)).